The following is a 480-amino-acid chain: Mannose-1-phosphate guanylyltransferase ManC (480 aa).

It belongs to the mannose-6-phosphate isomerase type 2 family.

It catalyses the reaction alpha-D-mannose 1-phosphate + GTP + H(+) = GDP-alpha-D-mannose + diphosphate. It functions in the pathway nucleotide-sugar biosynthesis; GDP-alpha-D-mannose biosynthesis; GDP-alpha-D-mannose from alpha-D-mannose 1-phosphate (GTP route): step 1/1. Its function is as follows. Involved in the biosynthesis of the capsular polysaccharide colanic acid. The sequence is that of Mannose-1-phosphate guanylyltransferase ManC (manC) from Salmonella typhimurium (strain LT2 / SGSC1412 / ATCC 700720).